An 89-amino-acid polypeptide reads, in one-letter code: Small ribosomal subunit protein uS17 (89 aa).

It belongs to the universal ribosomal protein uS17 family. Part of the 30S ribosomal subunit.

In terms of biological role, one of the primary rRNA binding proteins, it binds specifically to the 5'-end of 16S ribosomal RNA. The polypeptide is Small ribosomal subunit protein uS17 (Aromatoleum aromaticum (strain DSM 19018 / LMG 30748 / EbN1) (Azoarcus sp. (strain EbN1))).